Consider the following 242-residue polypeptide: uncharacterized protein (242 aa).

The 61-residue stretch at 2 to 62 (EKAYKLLSVQ…VEKPSVIFED (61 aa)) folds into the S4 RNA-binding domain. The active site involves Asp-93.

It belongs to the pseudouridine synthase RluA family.

The catalysed reaction is a uridine in RNA = a pseudouridine in RNA. This is an uncharacterized protein from Helicobacter pylori (strain J99 / ATCC 700824) (Campylobacter pylori J99).